A 296-amino-acid polypeptide reads, in one-letter code: MYLQLLKSLNRLHPRAWDFVQLSRMDRPIGIYLLLWPTLSAVWIAGNGSPTLANVLIFGLGVVLMRAAGCCINDFADRKVDGHVKRTADRPLASGRVRPREALALFAMLVGVSFLLVLCTNSRTVWLSFGAVALAFCYPFMKRYTYYPQVVLGAAYSWGIPMAFTAAGGELPASAWLLYIANLLWTVGYDTYYAMVDRDDDLKIGVKSTAILFGDADRNIILTLQLLSLGCLLLAGSRFDLGGWFHLGLLGAAACFAWEYWSTRKLDRESCFKAFLHNHWAGLLVFIGVVLDYAFR.

8 helical membrane passes run 28–48, 52–72, 102–122, 145–167, 174–196, 219–239, 241–261, and 275–295; these read PIGI…AGNG, LANV…GCCI, ALAL…CTNS, TYYP…FTAA, SAWL…YAMV, NIIL…GSRF, LGGW…WEYW, and FLHN…DYAF.

The protein belongs to the UbiA prenyltransferase family. Requires Mg(2+) as cofactor.

It localises to the cell inner membrane. The enzyme catalyses all-trans-octaprenyl diphosphate + 4-hydroxybenzoate = 4-hydroxy-3-(all-trans-octaprenyl)benzoate + diphosphate. Its pathway is cofactor biosynthesis; ubiquinone biosynthesis. Catalyzes the prenylation of para-hydroxybenzoate (PHB) with an all-trans polyprenyl group. Mediates the second step in the final reaction sequence of ubiquinone-8 (UQ-8) biosynthesis, which is the condensation of the polyisoprenoid side chain with PHB, generating the first membrane-bound Q intermediate 3-octaprenyl-4-hydroxybenzoate. The sequence is that of 4-hydroxybenzoate octaprenyltransferase from Pseudomonas putida (strain GB-1).